A 183-amino-acid chain; its full sequence is uncharacterized protein (183 aa).

This is an uncharacterized protein from Treponema pallidum (strain Nichols).